A 509-amino-acid polypeptide reads, in one-letter code: ATP synthase subunit alpha (509 aa).

169–176 lines the ATP pocket; the sequence is GDRQTGKT.

The protein belongs to the ATPase alpha/beta chains family. As to quaternary structure, F-type ATPases have 2 components, CF(1) - the catalytic core - and CF(0) - the membrane proton channel. CF(1) has five subunits: alpha(3), beta(3), gamma(1), delta(1), epsilon(1). CF(0) has three main subunits: a(1), b(2) and c(9-12). The alpha and beta chains form an alternating ring which encloses part of the gamma chain. CF(1) is attached to CF(0) by a central stalk formed by the gamma and epsilon chains, while a peripheral stalk is formed by the delta and b chains.

It is found in the cell inner membrane. The catalysed reaction is ATP + H2O + 4 H(+)(in) = ADP + phosphate + 5 H(+)(out). Functionally, produces ATP from ADP in the presence of a proton gradient across the membrane. The alpha chain is a regulatory subunit. This is ATP synthase subunit alpha from Paramagnetospirillum magneticum (strain ATCC 700264 / AMB-1) (Magnetospirillum magneticum).